The chain runs to 132 residues: D-ribose pyranase (132 aa).

The Proton donor role is filled by His20. Substrate-binding positions include Asp28, His99, and 121-123; that span reads YSN.

Belongs to the RbsD / FucU family. RbsD subfamily. Homodecamer.

The protein localises to the cytoplasm. The catalysed reaction is beta-D-ribopyranose = beta-D-ribofuranose. Its pathway is carbohydrate metabolism; D-ribose degradation; D-ribose 5-phosphate from beta-D-ribopyranose: step 1/2. Catalyzes the interconversion of beta-pyran and beta-furan forms of D-ribose. The polypeptide is D-ribose pyranase (Streptococcus agalactiae serotype III (strain NEM316)).